Here is a 499-residue protein sequence, read N- to C-terminus: Guanosine-5'-triphosphate,3'-diphosphate pyrophosphatase (499 aa).

Belongs to the GppA/Ppx family. GppA subfamily.

It carries out the reaction guanosine 3'-diphosphate 5'-triphosphate + H2O = guanosine 3',5'-bis(diphosphate) + phosphate + H(+). It participates in purine metabolism; ppGpp biosynthesis; ppGpp from GTP: step 2/2. Its function is as follows. Catalyzes the conversion of pppGpp to ppGpp. Guanosine pentaphosphate (pppGpp) is a cytoplasmic signaling molecule which together with ppGpp controls the 'stringent response', an adaptive process that allows bacteria to respond to amino acid starvation, resulting in the coordinated regulation of numerous cellular activities. This is Guanosine-5'-triphosphate,3'-diphosphate pyrophosphatase from Klebsiella pneumoniae subsp. pneumoniae (strain ATCC 700721 / MGH 78578).